The sequence spans 594 residues: MADLLSSLKNLPNSSGVYQYFDKNRQLLYIGKAKNLKKRIKSYFSIRNNEITPNHRASLRIQMMVKQIAFLETILVENEQDALILENSLIKQLKPKYNILLRDDKTYPYIYMDFSTDFPIPLITRKILKQPGVKYFGPFTSGAKDILDSLYELLPLVQKKNCIKDKKACIFYQIERCKAPCENKITKEEYLKIAKECLEMIENKDRLIKELELKMERLSNNLRFEEALIYRDRIAKIQKIAPFTCMDLAKLYDLDIFAFYGASNKAVLVKMFMRGGKIISSAFEKIHSLNGFDTDEAMKQAIINHYQSHLPLMPEQILLNACSNETLKELQEFISHQYSKKIALSIPKKGDKLALIEIAMKNAQEIFSQEKTSNEDLILEEARSLFKLECMPYRVEIFDTSHHSSSQCVGGMVVYENNAFQKNSYRRYHLKGSDEYTQMSELLTRRALDFAKEPPPNLWVIDGGRAQLNIALEILKSSGSFVEVIAISKEKRDSKAYRSKGGAKDIIHTPSDTFKLLPSDKRLQWVQKLRDESHRYAINFHRSTKLKNMKQIALLKEKGIGEASVKKLLDYFGSFEAIEKASEQEKNAVLKKRI.

One can recognise a GIY-YIG domain in the interval 13 to 99; sequence NSSGVYQYFD…IKQLKPKYNI (87 aa). Positions 205–240 constitute a UVR domain; it reads DRLIKELELKMERLSNNLRFEEALIYRDRIAKIQKI.

Belongs to the UvrC family. As to quaternary structure, interacts with UvrB in an incision complex.

The protein localises to the cytoplasm. Functionally, the UvrABC repair system catalyzes the recognition and processing of DNA lesions. UvrC both incises the 5' and 3' sides of the lesion. The N-terminal half is responsible for the 3' incision and the C-terminal half is responsible for the 5' incision. This Helicobacter pylori (strain ATCC 700392 / 26695) (Campylobacter pylori) protein is UvrABC system protein C.